Consider the following 2923-residue polypeptide: Cadherin EGF LAG seven-pass G-type receptor 2 (2923 aa).

The first 31 residues, 1-31, serve as a signal peptide directing secretion; sequence MRSPATGVPLPTPPPPLLLLLLLLLPPPLLG. Over 32–2380 the chain is Extracellular; that stretch reads DQVGPCRSLG…GEILPLKTLT (2349 aa). A disordered region spans residues 154 to 198; that stretch reads PGLRAGERSPEESLGGRRKRNVNTAPQFQPPSYQATVPENQPAGT. Positions 158-168 are enriched in basic and acidic residues; the sequence is AGERSPEESLG. Residues 175-196 are compositionally biased toward polar residues; the sequence is VNTAPQFQPPSYQATVPENQPA. Cadherin domains are found at residues 182–289, 290–399, 400–505, 506–610, 611–712, 713–815, 816–921, 922–1023, and 1028–1146; these read QPPS…DPVF, EQQE…APQF, SEKR…APIF, VSTP…NPTF, TQPE…RPVF, QSSH…APQF, LRDS…PPVF, EQDE…PPVL, and ILFN…SPLL. N-linked (GlcNAc...) asparagine glycosylation is found at asparagine 486, asparagine 557, and asparagine 701. N-linked (GlcNAc...) asparagine glycans are attached at residues asparagine 1036, asparagine 1076, asparagine 1182, and asparagine 1212. In terms of domain architecture, EGF-like 1; calcium-binding spans 1228 to 1286; sequence DDNICLREPCENYMRCVSVLRFDSSAPFIASSSVLFRPIHPVGGLRCRCPPGFTGDYCE. 9 cysteine pairs are disulfide-bonded: cysteine 1232/cysteine 1243, cysteine 1237/cysteine 1274, cysteine 1276/cysteine 1285, cysteine 1292/cysteine 1303, cysteine 1297/cysteine 1312, cysteine 1314/cysteine 1323, cysteine 1332/cysteine 1343, cysteine 1337/cysteine 1353, and cysteine 1355/cysteine 1365. The 37-residue stretch at 1288 to 1324 folds into the EGF-like 2; calcium-binding domain; that stretch reads EVDLCYSRPCGPHGRCRSREGGYTCLCRDGYTGEHCE. An EGF-like 3; calcium-binding domain is found at 1328–1366; sequence RSGRCTPGVCKNGGTCVNLLVGGFKCDCPSGDFEKPYCQ. The Laminin G-like 1 domain occupies 1367-1571; sequence VTTRSFPAHS…IANNGTVPGC (205 aa). N-linked (GlcNAc...) asparagine glycosylation is found at asparagine 1501 and asparagine 1565. 4 disulfide bridges follow: cysteine 1545–cysteine 1571, cysteine 1578–cysteine 1589, cysteine 1583–cysteine 1598, and cysteine 1600–cysteine 1609. The EGF-like 4; calcium-binding domain occupies 1574 to 1610; the sequence is KKNVCDSNTCHNGGTCVNQWDAFSCECPLGFGGKSCA. The residue at position 1591 (asparagine 1591) is a (3R)-3-hydroxyasparagine. A Laminin G-like 2 domain is found at 1614 to 1791; that stretch reads ANPQHFLGSS…GESINVEQGC (178 aa). Residue asparagine 1741 is glycosylated (N-linked (GlcNAc...) asparagine). Cystine bridges form between cysteine 1761–cysteine 1791, cysteine 1797–cysteine 1808, cysteine 1802–cysteine 1817, cysteine 1819–cysteine 1828, cysteine 1832–cysteine 1843, cysteine 1837–cysteine 1855, cysteine 1857–cysteine 1866, cysteine 1887–cysteine 1899, cysteine 1889–cysteine 1906, cysteine 1908–cysteine 1921, cysteine 1924–cysteine 1936, cysteine 1926–cysteine 1943, cysteine 1945–cysteine 1954, and cysteine 1957–cysteine 1969. The EGF-like 5; calcium-binding domain occupies 1793-1828; it reads LPDPCDSNPCPANSYCSNDWDSYSCSCDPGYYGDNC. Asparagine 1810 is modified ((3R)-3-hydroxyasparagine). Asparagine 1827 carries N-linked (GlcNAc...) asparagine glycosylation. Positions 1829 to 1867 constitute an EGF-like 6; calcium-binding domain; that stretch reads TNVCDLNPCEHQSVCTRKPSAPHGYTCECPPNYLGPYCE. The region spanning 1883–1922 is the EGF-like 7; calcium-binding domain; it reads TCGPCNCDVSKGFDPDCNKTSGECHCKENHYRPPGSPTCL. The N-linked (GlcNAc...) asparagine glycan is linked to asparagine 1900. The Laminin EGF-like domain occupies 1924-1971; it reads CDCYPTGSLSRVCDPEDGQCPCKPGVIGRQCDRCDNPFAEVTTNGCEV. Residues asparagine 2024, asparagine 2043, and asparagine 2061 are each glycosylated (N-linked (GlcNAc...) asparagine). Residues 2199–2369 enclose the GAIN-B domain; it reads ETTVILPESV…AVLMDVSRRE (171 aa). The disordered stretch occupies residues 2213–2238; that stretch reads PPVVRPAGPGEAQEPEELARRQRRHP. 2 disulfides stabilise this stretch: cysteine 2319-cysteine 2351 and cysteine 2339-cysteine 2353. The GPS stretch occupies residues 2319 to 2369; the sequence is CVFWNHSILVSGTGGWSARGCEVVFRNESHVSCQCNHMTSFAVLMDVSRRE. N-linked (GlcNAc...) asparagine glycosylation is found at asparagine 2323 and asparagine 2345. A helical membrane pass occupies residues 2381–2401; it reads YVALGVTLAALLLTFFFLTLL. At 2402 to 2416 the chain is on the cytoplasmic side; the sequence is RILRSNQHGIRRNLT. A helical membrane pass occupies residues 2417–2437; sequence AALGLAQLVFLLGINQADLPF. Alanine 2438 is a topological domain (extracellular). Residues 2439-2459 form a helical membrane-spanning segment; it reads CTVIAILLHFLYLCTFSWALL. Topologically, residues 2460–2480 are cytoplasmic; the sequence is EALHLYRALTEVRDVNTGPMR. The chain crosses the membrane as a helical span at residues 2481–2501; it reads FYYMLGWGVPAFITGLAVGLD. The Extracellular segment spans residues 2502 to 2519; the sequence is PEGYGNPDFCWLSIYDTL. A helical membrane pass occupies residues 2520 to 2540; that stretch reads IWSFAGPVAFAVSMSVFLYIL. The Cytoplasmic portion of the chain corresponds to 2541–2560; sequence AARASCAAQRQGFEKKGPVS. The chain crosses the membrane as a helical span at residues 2561 to 2581; that stretch reads GLQPSFAVLLLLSATWLLALL. The Extracellular segment spans residues 2582 to 2591; the sequence is SVNSDTLLFH. Residues 2592-2612 traverse the membrane as a helical segment; the sequence is YLFATCNCIQGPFIFLSYVVL. The Cytoplasmic portion of the chain corresponds to 2613-2923; it reads SKEVRKALKL…SEFLFFNFLH (311 aa). Disordered regions lie at residues 2688-2838 and 2854-2888; these read SALN…HKGI and LRLPLEQCTGSSRGSSASEGSRGGPPPRPPPRQSL. Acidic residues-rich tracts occupy residues 2718–2730 and 2742–2753; these read TDSDSDLSLEDDQ and SEEEEEEEEEEA. Residues 2807 to 2819 are compositionally biased toward basic and acidic residues; that stretch reads PEERLRENGDALS. Residues 2863–2873 show a composition bias toward low complexity; sequence GSSRGSSASEG.

The protein belongs to the G-protein coupled receptor 2 family. LN-TM7 subfamily. As to quaternary structure, heterodimer of 2 chains generated by proteolytic processing; the large extracellular N-terminal fragment and the membrane-bound C-terminal fragment predominantly remain associated and non-covalently linked. In terms of processing, the iron and 2-oxoglutarate dependent 3-hydroxylation of aspartate and asparagine is (R) stereospecific within EGF domains. Post-translationally, autoproteolytically processed at the GPS region of the GAIN-B domain; this cleavage modulates receptor activity. As to expression, highest expression in brain and testis.

The protein resides in the cell membrane. Receptor that may have an important role in cell/cell signaling during nervous system formation. This is Cadherin EGF LAG seven-pass G-type receptor 2 from Homo sapiens (Human).